A 425-amino-acid polypeptide reads, in one-letter code: MAGPTLLKESGPREVFCGLTSIVWLHRRMPDAFFLVVGSRTCAHLIQSAAGVMIFAEPRFGTAILSERDLAGLADAHDELDRVCKELLQRRPEIRTLFLVGSCPSEVIKLDLARAAERLNEELSGQVRVVNYSGSGIETTFTQGEDGALAALVPLLPASDERQLLLVGTLADAVEDRQMHLFQRMGIETIRSLPPRQSTDLPAVGAGTTVLLTQPFLTETARLLGDRGARVLTAPFPLGAEGSRRWMEAAADAFHLPDERVAAVLDPLVERAQSALARHRAVLEGKRIFLLPESQLELPLARFLHRECGMQLVEVGTPYLNREQMAAELDLLPDDVPVMEGQHVEQQLDRVRASQPDLVVCGMGLANPLEAEGIATKWSIELVFSPIHGIDQAGDLAELFSRPLRRRQLIRPGLHPSSLDPTVHA.

Residues Cys17, Cys42, and Cys103 each coordinate [4Fe-4S] cluster.

Belongs to the BchN/ChlN family. In terms of assembly, protochlorophyllide reductase is composed of three subunits; ChlL, ChlN and ChlB. Forms a heterotetramer of two ChlB and two ChlN subunits. [4Fe-4S] cluster is required as a cofactor.

The catalysed reaction is chlorophyllide a + oxidized 2[4Fe-4S]-[ferredoxin] + 2 ADP + 2 phosphate = protochlorophyllide a + reduced 2[4Fe-4S]-[ferredoxin] + 2 ATP + 2 H2O. The protein operates within porphyrin-containing compound metabolism; chlorophyll biosynthesis (light-independent). Component of the dark-operative protochlorophyllide reductase (DPOR) that uses Mg-ATP and reduced ferredoxin to reduce ring D of protochlorophyllide (Pchlide) to form chlorophyllide a (Chlide). This reaction is light-independent. The NB-protein (ChlN-ChlB) is the catalytic component of the complex. In Synechococcus sp. (strain CC9605), this protein is Light-independent protochlorophyllide reductase subunit N.